Consider the following 375-residue polypeptide: D-apiose dehydrogenase (375 aa).

29 to 30 (FF) is a binding site for NAD(+). Positions 38, 39, 41, and 44 each coordinate Mg(2+). Residues Asp51, Ser93, 111 to 112 (QK), Asn140, and 179 to 181 (QPY) contribute to the NAD(+) site. Lys112 contributes to the substrate binding site. The substrate site is built by Gln179, Asp192, His196, and Tyr246.

Belongs to the Gfo/Idh/MocA family.

The catalysed reaction is D-apiofuranose + NAD(+) = D-apionolactone + NADH + H(+). The protein operates within carbohydrate metabolism. In terms of biological role, involved in catabolism of D-apiose. Catalyzes oxidation of D-apiose to D-apionolactone. This Paraburkholderia graminis (strain ATCC 700544 / DSM 17151 / LMG 18924 / NCIMB 13744 / C4D1M) protein is D-apiose dehydrogenase.